Consider the following 69-residue polypeptide: uncharacterized protein (69 aa).

This is an uncharacterized protein from Treponema pallidum (strain Nichols).